Here is a 220-residue protein sequence, read N- to C-terminus: Glutamine amidotransferase-like class 1 domain-containing protein 1 (220 aa).

Residues M1–A35 form the signal peptide. Residues N57 and N201 are each glycosylated (N-linked (GlcNAc...) asparagine).

It belongs to the peptidase C56 family. In terms of assembly, homotetramer. Component of the FERRY complex composed of five subunits, TBCK, PPP1R21, FERRY3, CRYZL1 and GATD1 with a ratio of 1:2:1:2:4, respectively.

The protein localises to the secreted. It localises to the early endosome. In terms of biological role, component of the FERRY complex (Five-subunit Endosomal Rab5 and RNA/ribosome intermediary). The FERRY complex directly interacts with mRNAs and RAB5A, and functions as a RAB5A effector involved in the localization and the distribution of specific mRNAs most likely by mediating their endosomal transport. The complex recruits mRNAs and ribosomes to early endosomes through direct mRNA-interaction. The polypeptide is Glutamine amidotransferase-like class 1 domain-containing protein 1 (Bos taurus (Bovine)).